The sequence spans 226 residues: Hand transcription factor 1 (226 aa).

Over residues 1 to 15 (MVKSTTAGNNAVSSL) the composition is skewed to polar residues. The interval 1–35 (MVKSTTAGNNAVSSLESTDSKKSRKEKSREKEHRR) is disordered. Positions 23–36 (SRKEKSREKEHRRA) are basic motif. The region spanning 23–77 (SRKEKSREKEHRRAQCINSAFEILQQHIPYLKSEERKSLPKIKTLRLAMQYIDHL) is the bHLH domain. Residues 37–77 (QCINSAFEILQQHIPYLKSEERKSLPKIKTLRLAMQYIDHL) form a helix-loop-helix motif region.

The protein resides in the nucleus. Its function is as follows. Probable transcription factor which regulates early embryonic myogenesis, in cooperation with transcription factors unc-120 and hlh-1. Involved in controlling the number and position of somatic gonadal precursor cells (SGPs) in the gonadal primordium, and embryonic body shape. This Caenorhabditis elegans protein is Hand transcription factor 1.